The following is a 128-amino-acid chain: Aspartate 1-decarboxylase (128 aa).

Residue serine 25 is the Schiff-base intermediate with substrate; via pyruvic acid of the active site. Serine 25 carries the post-translational modification Pyruvic acid (Ser). A substrate-binding site is contributed by threonine 57. The active-site Proton donor is tyrosine 58. Residue glycine 73–alanine 75 participates in substrate binding.

This sequence belongs to the PanD family. As to quaternary structure, heterooctamer of four alpha and four beta subunits. Requires pyruvate as cofactor. In terms of processing, is synthesized initially as an inactive proenzyme, which is activated by self-cleavage at a specific serine bond to produce a beta-subunit with a hydroxyl group at its C-terminus and an alpha-subunit with a pyruvoyl group at its N-terminus.

Its subcellular location is the cytoplasm. It catalyses the reaction L-aspartate + H(+) = beta-alanine + CO2. It participates in cofactor biosynthesis; (R)-pantothenate biosynthesis; beta-alanine from L-aspartate: step 1/1. Its function is as follows. Catalyzes the pyruvoyl-dependent decarboxylation of aspartate to produce beta-alanine. This chain is Aspartate 1-decarboxylase, found in Burkholderia multivorans (strain ATCC 17616 / 249).